The chain runs to 211 residues: PITH domain-containing protein 1 (211 aa).

The PITH domain occupies 20 to 192; that stretch reads EPPEQRGLAY…EVTICNYEAS (173 aa). Tyr-189 carries the phosphotyrosine modification.

This sequence belongs to the PITHD1 family. Down-regulated in primary acute myeloid leukemia (AML) patients.

The protein localises to the cytoplasm. Its function is as follows. Promotes megakaryocyte differentiation by up-regulating RUNX1 expression. Regulates RUNX1 expression by activating the proximal promoter of the RUNX1 gene and by enhancing the translation activity of an internal ribosome entry site (IRES) element in the RUNX1 gene. This chain is PITH domain-containing protein 1 (PITHD1), found in Homo sapiens (Human).